The chain runs to 159 residues: Ribosomal RNA large subunit methyltransferase H (159 aa).

S-adenosyl-L-methionine contacts are provided by residues Leu-76, Gly-108, and 127–132 (FSKMTF).

It belongs to the RNA methyltransferase RlmH family. In terms of assembly, homodimer.

It localises to the cytoplasm. It carries out the reaction pseudouridine(1915) in 23S rRNA + S-adenosyl-L-methionine = N(3)-methylpseudouridine(1915) in 23S rRNA + S-adenosyl-L-homocysteine + H(+). In terms of biological role, specifically methylates the pseudouridine at position 1915 (m3Psi1915) in 23S rRNA. This is Ribosomal RNA large subunit methyltransferase H from Geobacillus sp. (strain WCH70).